We begin with the raw amino-acid sequence, 245 residues long: Major prion protein (245 aa).

A signal peptide spans 1 to 22; the sequence is MANLGCWMLVVFVATWSDLGLC. The interaction with GRB2, ERI3 and SYN1 stretch occupies residues 23–222; that stretch reads KKRPKPGGWN…ESQAYYQRGS (200 aa). A disordered region spans residues 25–102; that stretch reads RPKPGGWNTG…KPSKPKTSMK (78 aa). A run of 4 repeats spans residues 51–59, 60–67, 68–75, and 76–83. The interval 51 to 83 is 4 X 8 AA tandem repeats of P-H-G-G-G-W-G-Q; that stretch reads PQGGGGWGQPHGGGWGQPHGGGWGQPHGGGWGQ. A compositionally biased stretch (gly residues) spans 52 to 87; the sequence is QGGGGWGQPHGGGWGQPHGGGWGQPHGGGWGQGGGT. Residues Gly-54, Gly-55, His-61, Gly-62, Gly-63, His-69, Gly-70, Gly-71, His-77, Gly-78, and Gly-79 each contribute to the Cu(2+) site. The segment covering 90 to 101 has biased composition (basic residues); sequence QWHKPSKPKTSM. A disulfide bridge links Cys-171 with Cys-206. N-linked (GlcNAc...) asparagine glycosylation is found at Asn-173 and Asn-189. A lipid anchor (GPI-anchor amidated serine) is attached at Ser-222. A propeptide spans 223 to 245 (removed in mature form); that stretch reads SMVLFSSPPVILLISFLIFLIVG.

This sequence belongs to the prion family. Monomer and homodimer. Has a tendency to aggregate into amyloid fibrils containing a cross-beta spine, formed by a steric zipper of superposed beta-strands. Soluble oligomers may represent an intermediate stage on the path to fibril formation. Copper binding may promote oligomerization. Interacts with GRB2, APP, ERI3/PRNPIP and SYN1. Mislocalized cytosolically exposed PrP interacts with MGRN1; this interaction alters MGRN1 subcellular location and causes lysosomal enlargement. Interacts with KIAA1191.

It is found in the cell membrane. Its subcellular location is the golgi apparatus. Its primary physiological function is unclear. Has cytoprotective activity against internal or environmental stresses. May play a role in neuronal development and synaptic plasticity. May be required for neuronal myelin sheath maintenance. May play a role in iron uptake and iron homeostasis. Soluble oligomers are toxic to cultured neuroblastoma cells and induce apoptosis (in vitro). Association with GPC1 (via its heparan sulfate chains) targets PRNP to lipid rafts. Also provides Cu(2+) or Zn(2+) for the ascorbate-mediated GPC1 deaminase degradation of its heparan sulfate side chains. This Cercopithecus diana (Diana monkey) protein is Major prion protein (PRNP).